The following is a 105-amino-acid chain: Large ribosomal subunit protein bL21 (105 aa).

The protein belongs to the bacterial ribosomal protein bL21 family. In terms of assembly, part of the 50S ribosomal subunit. Contacts protein L20.

Its function is as follows. This protein binds to 23S rRNA in the presence of protein L20. The chain is Large ribosomal subunit protein bL21 from Treponema pallidum (strain Nichols).